A 188-amino-acid polypeptide reads, in one-letter code: Ribosomal RNA small subunit methyltransferase G (188 aa).

S-adenosyl-L-methionine is bound by residues Gly69, Phe74, 119 to 120 (VQ), and Arg134.

Belongs to the methyltransferase superfamily. RNA methyltransferase RsmG family.

It is found in the cytoplasm. It carries out the reaction guanosine(527) in 16S rRNA + S-adenosyl-L-methionine = N(7)-methylguanosine(527) in 16S rRNA + S-adenosyl-L-homocysteine. Its function is as follows. Specifically methylates the N7 position of guanine in position 527 of 16S rRNA. In Campylobacter jejuni subsp. jejuni serotype O:2 (strain ATCC 700819 / NCTC 11168), this protein is Ribosomal RNA small subunit methyltransferase G.